The primary structure comprises 291 residues: Acetyl-coenzyme A carboxylase carboxyl transferase subunit beta (291 aa).

A CoA carboxyltransferase N-terminal domain is found at 23–291 (VYTKDPVSGE…TPASASVAKS (269 aa)).

This sequence belongs to the AccD/PCCB family. In terms of assembly, acetyl-CoA carboxylase is a heterohexamer composed of biotin carboxyl carrier protein (AccB), biotin carboxylase (AccC) and two subunits each of ACCase subunit alpha (AccA) and ACCase subunit beta (AccD).

It localises to the cytoplasm. The enzyme catalyses N(6)-carboxybiotinyl-L-lysyl-[protein] + acetyl-CoA = N(6)-biotinyl-L-lysyl-[protein] + malonyl-CoA. It functions in the pathway lipid metabolism; malonyl-CoA biosynthesis; malonyl-CoA from acetyl-CoA: step 1/1. Its function is as follows. Component of the acetyl coenzyme A carboxylase (ACC) complex. Biotin carboxylase (BC) catalyzes the carboxylation of biotin on its carrier protein (BCCP) and then the CO(2) group is transferred by the transcarboxylase to acetyl-CoA to form malonyl-CoA. This is Acetyl-coenzyme A carboxylase carboxyl transferase subunit beta from Opitutus terrae (strain DSM 11246 / JCM 15787 / PB90-1).